A 470-amino-acid polypeptide reads, in one-letter code: Putative multidrug resistance protein MdtD (470 aa).

At 1–11 the chain is on the periplasmic side; that stretch reads MTELPDNTRWQ. A helical membrane pass occupies residues 12 to 32; the sequence is LWIVAFGFFMQSLDTTIVNTA. At 33 to 48 the chain is on the cytoplasmic side; sequence LPSMAKSLGESPLHMH. Residues 49-69 form a helical membrane-spanning segment; sequence MVVVSYVLTVAVMLPASGWLA. Residues 70-76 lie on the Periplasmic side of the membrane; it reads DKIGVRN. Residues 77–97 form a helical membrane-spanning segment; the sequence is IFFAAIVLFTLGSLFCALSGT. Topologically, residues 98 to 101 are cytoplasmic; the sequence is LNQL. The chain crosses the membrane as a helical span at residues 102-124; sequence VLARVLQGVGGAMMVPVGRLTVM. The Periplasmic segment spans residues 125-137; the sequence is KIVPRAQYMAAMT. A helical transmembrane segment spans residues 138-158; it reads FVTLPGQIGPLLGPALGGVLV. Over 159–164 the chain is Cytoplasmic; sequence EYASWH. Residues 165-185 form a helical membrane-spanning segment; it reads WIFLINIPVGIVGAMATFMLM. Topologically, residues 186–196 are periplasmic; it reads PNYIIETRRFD. Residues 197-217 form a helical membrane-spanning segment; the sequence is LPGFLLLAIGMAVLTLALDGS. Residues 218 to 224 lie on the Cytoplasmic side of the membrane; sequence KSMGISP. Residues 225–245 traverse the membrane as a helical segment; the sequence is WTLAGLAAGGAAAILLYLFHA. Residues 246 to 262 lie on the Periplasmic side of the membrane; sequence KKNSGALFSLRLFRTPT. The helical transmembrane segment at 263–283 threads the bilayer; that stretch reads FSLGLLGSFAGRIGSGMLPFM. The Cytoplasmic portion of the chain corresponds to 284-285; sequence TP. Residues 286-306 form a helical membrane-spanning segment; it reads VFLQIGLGFSPFHAGLMMIPM. The Periplasmic segment spans residues 307–341; the sequence is VLGSMGMKRIVVQIVNRFGYRRVLVATTLGLALVS. Residues 342–362 traverse the membrane as a helical segment; the sequence is LLFMSVALLGWYYLLPLVLLL. Topologically, residues 363-395 are cytoplasmic; that stretch reads QGMVNSARFSSMNTLTLKDLPDTLASSGNSLLS. Residues 396-416 traverse the membrane as a helical segment; sequence MIMQLSMSIGVTIAGMLLGMF. Residues 417–430 are Periplasmic-facing; it reads GQQHIGIDSSATHH. The helical transmembrane segment at 431–451 threads the bilayer; that stretch reads VFMYTWLCMAVIIALPAIIFA. Over 452-470 the chain is Cytoplasmic; the sequence is RVPNDTQQNMVISRRKRSL.

It belongs to the major facilitator superfamily. TCR/Tet family.

Its subcellular location is the cell inner membrane. This is Putative multidrug resistance protein MdtD from Salmonella typhimurium (strain LT2 / SGSC1412 / ATCC 700720).